Reading from the N-terminus, the 280-residue chain is Putative pyruvate, phosphate dikinase regulatory protein (280 aa).

154 to 161 (GVSRTSKT) serves as a coordination point for ADP.

It belongs to the pyruvate, phosphate/water dikinase regulatory protein family. PDRP subfamily.

The enzyme catalyses N(tele)-phospho-L-histidyl/L-threonyl-[pyruvate, phosphate dikinase] + ADP = N(tele)-phospho-L-histidyl/O-phospho-L-threonyl-[pyruvate, phosphate dikinase] + AMP + H(+). It carries out the reaction N(tele)-phospho-L-histidyl/O-phospho-L-threonyl-[pyruvate, phosphate dikinase] + phosphate + H(+) = N(tele)-phospho-L-histidyl/L-threonyl-[pyruvate, phosphate dikinase] + diphosphate. Functionally, bifunctional serine/threonine kinase and phosphorylase involved in the regulation of the pyruvate, phosphate dikinase (PPDK) by catalyzing its phosphorylation/dephosphorylation. This chain is Putative pyruvate, phosphate dikinase regulatory protein, found in Nitrobacter hamburgensis (strain DSM 10229 / NCIMB 13809 / X14).